Here is a 131-residue protein sequence, read N- to C-terminus: Large-conductance mechanosensitive channel (131 aa).

Helical transmembrane passes span 14–34 (IMDL…VTSL), 38–58 (IIMP…LAVT), and 67–87 (GSFI…FIVI).

It belongs to the MscL family. As to quaternary structure, homopentamer.

Its subcellular location is the cell membrane. Functionally, channel that opens in response to stretch forces in the membrane lipid bilayer. May participate in the regulation of osmotic pressure changes within the cell. The chain is Large-conductance mechanosensitive channel from Bacillus velezensis (strain DSM 23117 / BGSC 10A6 / LMG 26770 / FZB42) (Bacillus amyloliquefaciens subsp. plantarum).